A 387-amino-acid polypeptide reads, in one-letter code: TSC22 domain family protein 4 (387 aa).

Disordered stretches follow at residues 1-85 (MSGG…GEPY) and 135-232 (ISTP…RRDG). Residues 31-51 (PVPPALAGPPPRLPNGDPNPD) show a composition bias toward pro residues. A Phosphothreonine modification is found at threonine 57. Residues serine 62 and serine 165 each carry the phosphoserine modification. Threonine 183 is subject to Phosphothreonine. Phosphoserine is present on residues serine 187, serine 189, and serine 219. Threonine 223 is subject to Phosphothreonine. A phosphoserine mark is found at serine 254, serine 258, and serine 271. The interval 336–357 (LKEQIRDLAERNAALEQENGLL) is leucine-zipper. Serine 362 carries the phosphoserine modification. The interval 368 to 387 (QLPSSGLPRLGPSAPNGPSI) is disordered.

The protein belongs to the TSC-22/Dip/Bun family. As to quaternary structure, forms a homodimer or heterodimer. Forms a heterodimer with TSC22D1 isoforms 1 and 2. Interacts with NRBP1. As to expression, expressed in the liver (at protein level). Expressed in Purkinje cells and proliferating cerebellar granular neurons (at protein level). Expressed in the cortex, medulla and papilla of the kidney.

It localises to the nucleus. The protein resides in the cytoplasm. The protein localises to the cell projection. Its subcellular location is the dendrite. It is found in the synapse. In terms of biological role, binds DNA and acts as a transcriptional repressor. Involved in the regulation of systematic glucose homeostasis and insulin sensitivity, via transcriptional repression of downstream insulin signaling targets such as OBP2A/LCN13. Acts as a negative regulator of lipogenic gene expression in hepatocytes and thereby mediates the control of very low-density lipoprotein release. May play a role in neurite elongation and survival. The chain is TSC22 domain family protein 4 from Mus musculus (Mouse).